The chain runs to 84 residues: Small ribosomal subunit protein eS27 (84 aa).

Residues 1-16 (MPLAKDLLHPSPEEEK) show a composition bias toward basic and acidic residues. A disordered region spans residues 1–23 (MPLAKDLLHPSPEEEKRKHKKKR). Ser-11 is subject to Phosphoserine. A C4-type zinc finger spans residues 38-60 (PGCYKITTVFSHAQTVVLCVGCS).

Belongs to the eukaryotic ribosomal protein eS27 family. Component of the small ribosomal subunit. Part of the small subunit (SSU) processome, composed of more than 70 proteins and the RNA chaperone small nucleolar RNA (snoRNA) U3. It depends on Zn(2+) as a cofactor.

It localises to the cytoplasm. The protein resides in the nucleus. Its subcellular location is the nucleolus. In terms of biological role, component of the small ribosomal subunit. The ribosome is a large ribonucleoprotein complex responsible for the synthesis of proteins in the cell. Required for proper rRNA processing and maturation of 18S rRNAs. Part of the small subunit (SSU) processome, first precursor of the small eukaryotic ribosomal subunit. During the assembly of the SSU processome in the nucleolus, many ribosome biogenesis factors, an RNA chaperone and ribosomal proteins associate with the nascent pre-rRNA and work in concert to generate RNA folding, modifications, rearrangements and cleavage as well as targeted degradation of pre-ribosomal RNA by the RNA exosome. This Mus musculus (Mouse) protein is Small ribosomal subunit protein eS27.